The primary structure comprises 606 residues: NADH-ubiquinone oxidoreductase chain 5 (606 aa).

The next 15 membrane-spanning stretches (helical) occupy residues valine 3 to isoleucine 23, isoleucine 38 to isoleucine 58, phenylalanine 87 to serine 107, leucine 124 to phenylalanine 144, isoleucine 180 to glutamate 200, leucine 216 to leucine 236, threonine 244 to isoleucine 264, isoleucine 276 to leucine 296, isoleucine 304 to asparagine 323, alanine 328 to isoleucine 350, methionine 369 to leucine 389, methionine 404 to serine 424, leucine 460 to threonine 480, methionine 483 to valine 503, and leucine 586 to leucine 606.

The protein belongs to the complex I subunit 5 family. In terms of assembly, core subunit of respiratory chain NADH dehydrogenase (Complex I) which is composed of 45 different subunits.

Its subcellular location is the mitochondrion inner membrane. The enzyme catalyses a ubiquinone + NADH + 5 H(+)(in) = a ubiquinol + NAD(+) + 4 H(+)(out). Its function is as follows. Core subunit of the mitochondrial membrane respiratory chain NADH dehydrogenase (Complex I) which catalyzes electron transfer from NADH through the respiratory chain, using ubiquinone as an electron acceptor. Essential for the catalytic activity and assembly of complex I. This Loxodonta africana (African elephant) protein is NADH-ubiquinone oxidoreductase chain 5 (MT-ND5).